A 378-amino-acid polypeptide reads, in one-letter code: Ribosomal RNA large subunit methyltransferase G (378 aa).

It belongs to the methyltransferase superfamily. RlmG family.

It localises to the cytoplasm. It catalyses the reaction guanosine(1835) in 23S rRNA + S-adenosyl-L-methionine = N(2)-methylguanosine(1835) in 23S rRNA + S-adenosyl-L-homocysteine + H(+). In terms of biological role, specifically methylates the guanine in position 1835 (m2G1835) of 23S rRNA. This Escherichia coli O1:K1 / APEC protein is Ribosomal RNA large subunit methyltransferase G.